The sequence spans 276 residues: WIMGHMVNKIEQINEFLDLGANSIEVDIAFDELGYPEYTYHGVPCDCKRYCTKSEKIDDFIEALSAATTPGNPKFRKELTLVVFDLKTGGFDASRMYKSGKAFAELIQFSYWKGSDDAGRAYIVLSLPKLDHYEFIKAFREHFDTSTFKNLLEERVGYDFSGNEDMGLTRVVLDKAGVNDREHVWQGDGITNCILRSLDRVKAAVAIRDSATGYINKVYFWTIQAYSSVRDALNAEVDGIMTNEPDVIANILKEDAFKDRFRLATYRDNPWETFKR.

His5 is an active-site residue. 2 residues coordinate Mg(2+): Glu25 and Asp27. Catalysis depends on His41, which acts as the Nucleophile. 2 cysteine pairs are disulfide-bonded: Cys45–Cys51 and Cys47–Cys193. A Mg(2+)-binding site is contributed by Asp85.

Belongs to the arthropod phospholipase D family. Class II subfamily. It depends on Mg(2+) as a cofactor. Expressed by the venom gland.

The protein localises to the secreted. It carries out the reaction an N-(acyl)-sphingosylphosphocholine = an N-(acyl)-sphingosyl-1,3-cyclic phosphate + choline. The enzyme catalyses an N-(acyl)-sphingosylphosphoethanolamine = an N-(acyl)-sphingosyl-1,3-cyclic phosphate + ethanolamine. The catalysed reaction is a 1-acyl-sn-glycero-3-phosphocholine = a 1-acyl-sn-glycero-2,3-cyclic phosphate + choline. It catalyses the reaction a 1-acyl-sn-glycero-3-phosphoethanolamine = a 1-acyl-sn-glycero-2,3-cyclic phosphate + ethanolamine. Dermonecrotic toxins cleave the phosphodiester linkage between the phosphate and headgroup of certain phospholipids (sphingolipid and lysolipid substrates), forming an alcohol (often choline) and a cyclic phosphate. This toxin acts on sphingomyelin (SM). It may also act on ceramide phosphoethanolamine (CPE), lysophosphatidylcholine (LPC) and lysophosphatidylethanolamine (LPE), but not on lysophosphatidylserine (LPS), and lysophosphatidylglycerol (LPG). It acts by transphosphatidylation, releasing exclusively cyclic phosphate products as second products. Induces dermonecrosis, hemolysis, increased vascular permeability, edema, inflammatory response, and platelet aggregation. The polypeptide is Dermonecrotic toxin LlSicTox-alphaIV2iii (Loxosceles laeta (South American recluse spider)).